Reading from the N-terminus, the 502-residue chain is ATP synthase subunit alpha (502 aa).

169-176 (GDRQTGKT) contributes to the ATP binding site.

Belongs to the ATPase alpha/beta chains family. In terms of assembly, F-type ATPases have 2 components, CF(1) - the catalytic core - and CF(0) - the membrane proton channel. CF(1) has five subunits: alpha(3), beta(3), gamma(1), delta(1), epsilon(1). CF(0) has three main subunits: a(1), b(2) and c(9-12). The alpha and beta chains form an alternating ring which encloses part of the gamma chain. CF(1) is attached to CF(0) by a central stalk formed by the gamma and epsilon chains, while a peripheral stalk is formed by the delta and b chains.

It is found in the cell inner membrane. The catalysed reaction is ATP + H2O + 4 H(+)(in) = ADP + phosphate + 5 H(+)(out). In terms of biological role, produces ATP from ADP in the presence of a proton gradient across the membrane. The alpha chain is a regulatory subunit. This chain is ATP synthase subunit alpha, found in Solidesulfovibrio magneticus (strain ATCC 700980 / DSM 13731 / RS-1) (Desulfovibrio magneticus).